We begin with the raw amino-acid sequence, 65 residues long: Ferredoxin-1 (65 aa).

The region spanning 3–31 (RKFYVDQDECIACESCVEIAPGAFAMDPE) is the 4Fe-4S ferredoxin-type domain. C12, C15, C18, and C55 together coordinate [4Fe-4S] cluster.

Homodimer. [4Fe-4S] cluster is required as a cofactor.

Ferredoxins are iron-sulfur proteins that transfer electrons in a wide variety of metabolic reactions. This chain is Ferredoxin-1 (fd1), found in Desulfocurvibacter africanus (Desulfovibrio africanus).